We begin with the raw amino-acid sequence, 236 residues long: Small ribosomal subunit protein uS2c (236 aa).

This sequence belongs to the universal ribosomal protein uS2 family.

The protein resides in the plastid. It localises to the chloroplast. This chain is Small ribosomal subunit protein uS2c (rps2), found in Panax ginseng (Korean ginseng).